The primary structure comprises 68 residues: MKKGIHPELKPTTFVCGCGNTFTLLSTKGGTVYLEVCNQCHPFYAGKLKIKPAYYEMLAEFEGGKKEE.

Zn(2+) is bound by residues Cys-16, Cys-18, Cys-37, and Cys-40.

The protein belongs to the bacterial ribosomal protein bL31 family. Type A subfamily. As to quaternary structure, part of the 50S ribosomal subunit. Requires Zn(2+) as cofactor.

In terms of biological role, binds the 23S rRNA. In Aquifex aeolicus (strain VF5), this protein is Large ribosomal subunit protein bL31.